The sequence spans 519 residues: tRNA pseudouridine synthase Pus10 (519 aa).

Positions 70 to 98 (NENEEIDENTKNNEDTENKADDKSQSNEE) are disordered. The span at 77 to 98 (ENTKNNEDTENKADDKSQSNEE) shows a compositional bias: basic and acidic residues. The 122-residue stretch at 144-265 (NESEENESNI…NQKIYLQINP (122 aa)) folds into the THUMP domain. Residue Asp-334 is the Nucleophile of the active site. Residues Tyr-398 and Tyr-476 each coordinate substrate.

The protein belongs to the pseudouridine synthase Pus10 family.

The enzyme catalyses uridine(54) in tRNA = pseudouridine(54) in tRNA. It carries out the reaction uridine(55) in tRNA = pseudouridine(55) in tRNA. Responsible for synthesis of pseudouridine from uracil-54 and uracil-55 in the psi GC loop of transfer RNAs. This is tRNA pseudouridine synthase Pus10 from Methanococcus voltae (strain ATCC BAA-1334 / A3).